The following is a 1733-amino-acid chain: Desertorin synthase (1733 aa).

Positions 21–358 are N-terminal acylcarrier protein transacylase domain (SAT); sequence RIRQQSRSSR…HAPTRDLTEW (338 aa). The 428-residue stretch at 372–799 folds into the Ketosynthase family 3 (KS3) domain; the sequence is DCRIAVVGMS…GGNTALLLEE (428 aa). Residues 406 to 422 show a composition bias toward basic and acidic residues; it reads HVPPDRYDVQSHTDPTG. The disordered stretch occupies residues 406–429; sequence HVPPDRYDVQSHTDPTGRRMNTSQ. Residues Cys544, His679, and His718 each act as for beta-ketoacyl synthase activity in the active site. Residues 903–1211 form a malonyl-CoA:ACP transacylase (MAT) domain region; that stretch reads FVFSGQGSFY…DNWHTLAGSM (309 aa). The tract at residues 1288 to 1420 is N-terminal hotdog fold; sequence HRIVEETFWA…GTVSVGNAAS (133 aa). One can recognise a PKS/mFAS DH domain in the interval 1288 to 1598; the sequence is HRIVEETFWA…LRPLPRILMH (311 aa). Residues 1299–1594 form a product template (PT) domain region; that stretch reads GGRVVMESNV…AGVTLRPLPR (296 aa). Catalysis depends on His1320, which acts as the Proton acceptor; for dehydratase activity. Positions 1448-1598 are C-terminal hotdog fold; it reads ADRLTRDTVY…LRPLPRILMH (151 aa). The active-site Proton donor; for dehydratase activity is Asp1506. The disordered stretch occupies residues 1608–1659; sequence HNWGNSPAKPEAKPEMVPTSGSSSAAGSPSGSSAGPLSIPERLADPSETSFQ. Low complexity predominate over residues 1627 to 1643; that stretch reads SGSSSAAGSPSGSSAGP. Residues 1659-1733 enclose the Carrier domain; the sequence is QSKASKVSKA…TVGEVKRQML (75 aa). At Ser1696 the chain carries O-(pantetheine 4'-phosphoryl)serine.

Requires pantetheine 4'-phosphate as cofactor.

It functions in the pathway secondary metabolite biosynthesis. Its function is as follows. Non-reducing polyketide synthase; part of the gene cluster that mediates the biosynthesis of the bicoumarin desertorin. The non-reducing polyketide synthase desS first catalyzes the formation of the pentaketidic 4,7-dihydroxy-5-methylcoumarin from acetyl coenzyme A and 4 malonyl coenzyme A molecules. Further O-methylation by desB leads to the formation of 7-demethylsiderin. Then, an oxidative phenol coupling catalyzed by the cytochrome P450 monooxygenase desC forms the 6,8'-dimer M-desertorin A via dimerization the monomeric precursor, 7-demethylsiderin. M-desertorin A is further converted to M-desertorin C. The polypeptide is Desertorin synthase (Aspergillus desertorum (Emericella desertorum)).